The chain runs to 2208 residues: MSAASSSSVLHLRTNQQLLSLRSLKNSTSVASQLAVTSGVSRRRSCTARCSVKKPVIPESPFLGTRVRRSGSETLQFWRSDGPGRSAKLRTVVKSSFSAVPEKPLGLYDPSYDKDSCGVGFVAELSGETTRKTVTDSLEMLIRMTHRGACGCESNTGDGAGILVGLPHDFYAEAATELGFVLPSAGNYAVGMFFLPTVESRREESKNVFTKVAESLGHSVLGWRLVPTDNSGLGNSALQTEPIIAQVFLTPTTKSKADFEQQMYILRRVSMVAIRAALNLQHGAMKDFYICSLSSRTIVYKGQLKPDQLKDYYYADLGSERFTSYMALVHSRFSTNTFPSWDRAQPMRVLGHNGEINTLRGNVNWMRAREGLLKCNELGLSKKELKKLLPIVDVSSSDSGAFDGVLELLVRAGRSLPEAVMMMIPEAWQNDKNIDPSRKEFYEYLSALMEPWDGPALISFTDGRYLGATLDRNGLRPGRFYITHSGRVIMASEVGVVDVPPEDVMRKGRLNPGMMLLVDFEKHIVVDDDALKQQYSLARPYGEWLKRQKIELKDIIESVPEAERIAPSISGVVPASNDDDSMESMGIHGLLSPLKAFGYTVEALEMLLLPMAKDGSEALGSMGNDTPLAVMSNREKLCFEYFKQMFAQVTNPPIDPIREKIVTSMECMIGPEGDLTETTEEQCHRLSLKGPLLKIEEMEAIKKMNYRGWRTKVLDITYAKERGTKGLEETLDRICDEANEAIKEGYTLLVLSDRAFSATRVAVSSLMAVGAVHHHLVKTLARTQVGLVVESAEPREVHHFCTLVGFGADAICPYLAVEAVYRLQVDGKIPPKSNGEFHSKEELVKKYYKASNYGMMKVLAKMGISTLASYKGAQIFEALGLSSEVIQKCFAGTPSRVEGATFEMLARDGLQLHELAFPTRGYAPGSAEASALTNPGNYHWRKNGEIHLNDPLAIAKLQEAARTNSVAAYKEYSKRINELNKQSNLRGLMKFKDADVKIPLDEVEPASEIVKRFCTGAMSYGSISLEAHTTLAMAMNKLGGKSNTGEGGELPSRMEPLADGSRNPKRSSIKQIASGRFGVSSYYLTNADELQIKMAQGAKPGEGGELPGHKVIGDIAITRNSTAGVGLISPPPHHDIYSIEDLAQLIHDLKNANPGARISVKLVSEAGVGVIASGVVKGHADHVLIAGHDGGTGASRWTGIKNAGLPWELGLAETHQTLVANDLRGRTVLQTDGQLKTGRDVAVAALLGAEEFGFSTAPLITLGCIMMRKCHKNTCPVGIATQDPVLREKFAGEPEHVINFFFMLAEEVREIMSGLGFRTVTEMIGRADMLELDREVVKNNDKLENIDLSLLLRPAAEIRPGAAQYCVQKQDHGLDMALDQELIALSKSALEKSLPVYIETPICNVNRAVGTMLSHEVTKRYHLTGLPKDTIHIKFTGSAGQSLGAFLCPGIMLELEGDSNDYVGKGLSGGKVVVYPPKGSSFDPKENIVIGNVALYGATSGEAYFNGMAAERFSVRNSGAKAVVEGLGDHGCEYMTGGTVVVLGKTGRNFAAGMSGGIAYVLDVDGKFNTRCNLELVDLDKVEDEEDKMTLKMMIQQHQRHTNSQLAQEVLADFENLLPKFIKVFPRDYKRVLSAMKHEEVSKQAIERASEEADETEEKELEEKDAFAELKNMAAASSKEEMSGNGVAAEARPSKVDNAVKNGGFIAYEREGVKYRDPNVRLNDWNEVMEESKPGPLLTTQSARCMDCGTPFCHQENSGCPLGNKIPEFNELVYQNRWQEALNRLLETNNFPEFTGRVCPAPCEGSCVLGIIENPVSIKSIECAIIDKAFEEGWMVPRPPLKRTGKKVAIIGSGPAGLAAADQLNKMGHLVTVYERSDRIGGLMMYGVPNMKTDKIDVVQRRVDLMTKEGINFVVNANIGKDPSYSLDGLKEENDAIVLAVGSTKPRDLPVPGRDLSGVHFAMEFLHANTKSLLDSNHEDGNYISAKGKKVVVIGGGDTGTDCIGTSIRHGCTNIVNLELLPQPPSTRAPGNPWPQWPRVFRIDYGHQEATTKFGKDPRTYEVLTKRFIGDDNGNVKGLELVRVSWEKDETGRFQFKEIEGSEEIIEADLVFLAMGFLGPEPTLAEKLGLECDNRSNFKAEYGRFSTTVEGVFAAGDCRRGQSLVVWAISEGRQAADQVDKFLTKTDDDEDAKLQQDLNQMKHNTITN.

Residues 1-49 (MSAASSSSVLHLRTNQQLLSLRSLKNSTSVASQLAVTSGVSRRRSCTAR) constitute a chloroplast transit peptide. The Nucleophile role is filled by cysteine 117. One can recognise a Glutamine amidotransferase type-2 domain in the interval 117-521 (CGVGFVAELS…PGMMLLVDFE (405 aa)). Residues 1040–1067 (GKSNTGEGGELPSRMEPLADGSRNPKRS) are disordered. 1211–1268 (LAETHQTLVANDLRGRTVLQTDGQLKTGRDVAVAALLGAEEFGFSTAPLITLGCIMMR) is a binding site for FMN. [3Fe-4S] cluster-binding residues include cysteine 1264, cysteine 1270, and cysteine 1275. 1995–2009 (GGGDTGTDCIGTSIR) lines the NAD(+) pocket.

Belongs to the glutamate synthase family. Monomer. The cofactor is [3Fe-4S] cluster. Requires FAD as cofactor. It depends on FMN as a cofactor. Highly expressed in roots and at low levels in leaves.

The protein resides in the plastid. It localises to the chloroplast. It carries out the reaction 2 L-glutamate + NAD(+) = L-glutamine + 2-oxoglutarate + NADH + H(+). Its pathway is amino-acid biosynthesis; L-glutamate biosynthesis via GLT pathway; L-glutamate from 2-oxoglutarate and L-glutamine (NAD(+) route): step 1/1. It functions in the pathway energy metabolism; nitrogen metabolism. Involved in glutamate biosynthesis. Required for non-photorespiratory ammonium assimilation. Probably involved in primary ammonium assimilation in roots. The sequence is that of Glutamate synthase 1 [NADH], chloroplastic (GLT1) from Arabidopsis thaliana (Mouse-ear cress).